Here is a 495-residue protein sequence, read N- to C-terminus: Inner membrane ALBINO3-like protein 1, chloroplastic (495 aa).

The chain crosses the membrane as a helical span at residues 76-96; that stretch reads LGAIYVLADASASTAAAAVMP. The Stromal segment spans residues 97–206; the sequence is TAVDSAAGAA…VLYEQAGVNP (110 aa). A helical membrane pass occupies residues 207–227; the sequence is LAGCLPTLATIPIFIGLFSSL. Topologically, residues 228–273 are lumenal; it reads TNVANDGLLDTQGFYFVPSLAGPTTMAMRQSGLGTSWLWPLGPDGA. A helical membrane pass occupies residues 274–294; the sequence is PPIGWEDAAAYLTLPLLLVAV. The Stromal portion of the chain corresponds to 295–317; the sequence is QYASSSVTSPPIDPKDENANTQR. A helical transmembrane segment spans residues 318 to 338; the sequence is ALLVFLPLMVGWFSLNVPAGL. The Lumenal segment spans residues 339–441; it reads SLYYLANTVL…ASVSLSVDDS (103 aa). A helical membrane pass occupies residues 442-462; that stretch reads TAAIAGTATMAVTAGAPAAAM. At 463–495 the chain is on the stromal side; sequence DPSKVNRRCKRRRLTSLVQDGSTASAAVAGASA.

Belongs to the OXA1/ALB3/YidC (TC 2.A.9.2) family. Associates with the LHCII complex and with the psaE subunit of the LHCI complex.

Its subcellular location is the plastid. It is found in the chloroplast thylakoid membrane. In terms of biological role, required for the insertion of some light-harvesting complexes (LHC) proteins into the chloroplast thylakoid membrane. Essential for the assembly and activity of LHC I and II. Its function is probably partly distinct from that of ALB3.2. This chain is Inner membrane ALBINO3-like protein 1, chloroplastic (ALB3.1), found in Chlamydomonas reinhardtii (Chlamydomonas smithii).